Reading from the N-terminus, the 220-residue chain is Splicing factor U2AF 26 kDa subunit (220 aa).

Residue A2 is modified to N-acetylalanine. A C3H1-type 1 zinc finger spans residues E12–P40. The region spanning S65–V147 is the RRM domain. Residues D149–P176 form a C3H1-type 2 zinc finger. The segment at Y186 to F220 is disordered. Residues G189 to F220 are compositionally biased toward basic residues.

The protein belongs to the splicing factor SR family. Interacts with GFI1, U2AF2 and C1QBP.

The protein localises to the nucleus. It localises to the nucleus speckle. Its subcellular location is the cytoplasm. RNA-binding protein that function as a pre-mRNA splicing factor. Plays a critical role in both constitutive and enhancer-dependent splicing by mediating protein-protein interactions and protein-RNA interactions required for accurate 3'-splice site selection. Acts by enhancing the binding of U2AF2 to weak pyrimidine tracts. Also participates in the regulation of alternative pre-mRNA splicing. Activates exon 5 skipping of PTPRC during T-cell activation; an event reversed by GFI1. Binds to RNA at the AG dinucleotide at the 3'-splice site. Shows a preference for AGC or AGA. This chain is Splicing factor U2AF 26 kDa subunit (U2AF1L4), found in Bos taurus (Bovine).